A 941-amino-acid polypeptide reads, in one-letter code: HMG box transcription factor BBX (941 aa).

The span at 1–18 (MKGSNRNKDHSAEGEGVG) shows a compositional bias: basic and acidic residues. Disordered stretches follow at residues 1–21 (MKGS…GKRP), 39–80 (FSEE…EQRA), 157–200 (VKSP…FGMA), and 221–242 (TPEV…LRQK). Composition is skewed to acidic residues over residues 39-52 (FSEE…EEDI) and 63-75 (LEQD…DDES). The segment at residues 80–148 (ARRPMNAFLL…AFMKANPGYK (69 aa)) is a DNA-binding region (HMG box). Residues 177 to 191 (SSRDLPSPKKAKTEE) are compositionally biased toward basic and acidic residues. Residue S243 is modified to Phosphoserine. Residues 326 to 370 (GRIKELEKGKEEKEIKMEKTDETRLQKEAEFEKSAKENLRDSKEL) are a coiled coil. A Glycyl lysine isopeptide (Lys-Gly) (interchain with G-Cter in SUMO2) cross-link involves residue K385. The interval 438 to 482 (IEDPAALNKPEKLKKKKKKSKMDRHGNDKSTPKKTCKKRQSSESD) is disordered. A compositionally biased stretch (basic residues) spans 449-459 (KLKKKKKKSKM). A phosphoserine mark is found at S478 and S485. Composition is skewed to basic and acidic residues over residues 499-508 (GIEKLGDTPR) and 536-552 (KKMS…ESRP). Disordered stretches follow at residues 499 to 600 (GIEK…SDCH) and 635 to 677 (NVDR…KKTK). Residue K573 forms a Glycyl lysine isopeptide (Lys-Gly) (interchain with G-Cter in SUMO2) linkage. Positions 661–670 (TFSQSGTSGS) are enriched in low complexity. A Glycyl lysine isopeptide (Lys-Gly) (interchain with G-Cter in SUMO2) cross-link involves residue K696. Phosphoserine is present on S704. 3 disordered regions span residues 714 to 771 (PVPR…DKWS), 803 to 888 (IPSI…SSTP), and 912 to 941 (HRGQ…CADQ). The segment covering 723 to 742 (GNVSSEPTKTSKGPFQSQKK) has biased composition (polar residues). Positions 743 to 757 (NLFHKIVSKYKHKKE) are enriched in basic residues. Basic and acidic residues predominate over residues 758–771 (KPNVPEKGSGDKWS). Residues 805–817 (SIFNTPEPTTTQE) are compositionally biased toward polar residues. S822 carries the phosphoserine modification. A compositionally biased stretch (basic residues) spans 823–834 (QKRKARKTKITH). S844 is subject to Phosphoserine. Over residues 866–882 (TETDCNDKCSHNTEVGE) the composition is skewed to basic and acidic residues.

It is found in the nucleus. Its function is as follows. Transcription factor that is necessary for cell cycle progression from G1 to S phase. The sequence is that of HMG box transcription factor BBX (BBX) from Homo sapiens (Human).